The primary structure comprises 241 residues: Tetraspanin-1 (241 aa).

Residues 1–11 are Cytoplasmic-facing; sequence MGCFNFIKVMM. A helical membrane pass occupies residues 12–32; that stretch reads ILFNMLIFLCGAALLAVGIWV. Residues 33–52 are Extracellular-facing; sequence SVDGPSFVKIFGPMSSSAMQ. Residues 53–73 form a helical membrane-spanning segment; that stretch reads FVNVGYFLIAAGAVLFALGFL. The Cytoplasmic segment spans residues 74–88; that stretch reads GCYGAQTESKCALMT. The helical transmembrane segment at 89-109 threads the bilayer; that stretch reads FFFILLLIFIAEVAAAVVALV. The Extracellular portion of the chain corresponds to 110 to 211; it reads YTTLAENFLT…KQLLYDIRTN (102 aa). N-linked (GlcNAc...) asparagine glycosylation is found at Asn141, Asn154, Asn167, Asn180, Asn189, and Asn194. Residues 212–232 form a helical membrane-spanning segment; the sequence is AVTVGGVAAGIGGLELAAMIV. The Cytoplasmic segment spans residues 233-241; the sequence is SMYLYCNLE.

The protein belongs to the tetraspanin (TM4SF) family. As to quaternary structure, interacts with SLC19A2. Interacts with NTRK1/TRKA.

Its subcellular location is the lysosome membrane. Structural component of specialized membrane microdomains known as tetraspanin-enriched microdomains (TERMs), which act as platforms for receptor clustering and signaling. Participates thereby in diverse biological functions such as cell signal transduction, adhesion, migration and protein trafficking. Regulates neuronal differentiation in response to NGF by facilitating NGF-mediated activation of NTRK1/TRKA receptor tyrosine kinase and subsequent downstream signaling pathways. Plays a role in the inhibition of TNFalpha-induced apoptosis. Mechanistically, inhibits the NF-kappa-B signaling pathway by blocking phosphorylation of CHUK. Also promotes the stability of the thiamine transporter 1/SLC19A2 in intestinal epithelial cells leading to an increase of thiamine uptake process. The polypeptide is Tetraspanin-1 (TSPAN1) (Bos taurus (Bovine)).